The following is a 395-amino-acid chain: Elongation factor Tu (395 aa).

The 195-residue stretch at 10–204 (KPHVNVGTIG…AVDAYIDTPL (195 aa)) folds into the tr-type G domain. Positions 19–26 (GHVDHGKT) are G1. Residue 19-26 (GHVDHGKT) coordinates GTP. Mg(2+) is bound at residue threonine 26. The G2 stretch occupies residues 60–64 (GITIN). Positions 81 to 84 (DCPG) are G3. Residues 81–85 (DCPGH) and 136–139 (NKAD) contribute to the GTP site. The G4 stretch occupies residues 136–139 (NKAD). Positions 174 to 176 (SAL) are G5.

Belongs to the TRAFAC class translation factor GTPase superfamily. Classic translation factor GTPase family. EF-Tu/EF-1A subfamily. As to quaternary structure, monomer.

The protein localises to the cytoplasm. The enzyme catalyses GTP + H2O = GDP + phosphate + H(+). GTP hydrolase that promotes the GTP-dependent binding of aminoacyl-tRNA to the A-site of ribosomes during protein biosynthesis. This Acholeplasma laidlawii (strain PG-8A) protein is Elongation factor Tu.